Reading from the N-terminus, the 273-residue chain is Ribosomal RNA small subunit methyltransferase A (273 aa).

Asn-18, Leu-20, Gly-45, Glu-66, Asp-91, and Asn-113 together coordinate S-adenosyl-L-methionine.

This sequence belongs to the class I-like SAM-binding methyltransferase superfamily. rRNA adenine N(6)-methyltransferase family. RsmA subfamily.

Its subcellular location is the cytoplasm. It carries out the reaction adenosine(1518)/adenosine(1519) in 16S rRNA + 4 S-adenosyl-L-methionine = N(6)-dimethyladenosine(1518)/N(6)-dimethyladenosine(1519) in 16S rRNA + 4 S-adenosyl-L-homocysteine + 4 H(+). Functionally, specifically dimethylates two adjacent adenosines (A1518 and A1519) in the loop of a conserved hairpin near the 3'-end of 16S rRNA in the 30S particle. May play a critical role in biogenesis of 30S subunits. This chain is Ribosomal RNA small subunit methyltransferase A, found in Escherichia coli O139:H28 (strain E24377A / ETEC).